Reading from the N-terminus, the 127-residue chain is Aspartate 1-decarboxylase (127 aa).

The active-site Schiff-base intermediate with substrate; via pyruvic acid is S25. Pyruvic acid (Ser) is present on S25. T57 provides a ligand contact to substrate. The active-site Proton donor is Y58. 73-75 (GAA) is a substrate binding site.

It belongs to the PanD family. As to quaternary structure, heterooctamer of four alpha and four beta subunits. Pyruvate is required as a cofactor. Post-translationally, is synthesized initially as an inactive proenzyme, which is activated by self-cleavage at a specific serine bond to produce a beta-subunit with a hydroxyl group at its C-terminus and an alpha-subunit with a pyruvoyl group at its N-terminus.

It localises to the cytoplasm. The catalysed reaction is L-aspartate + H(+) = beta-alanine + CO2. It functions in the pathway cofactor biosynthesis; (R)-pantothenate biosynthesis; beta-alanine from L-aspartate: step 1/1. Functionally, catalyzes the pyruvoyl-dependent decarboxylation of aspartate to produce beta-alanine. This Listeria innocua serovar 6a (strain ATCC BAA-680 / CLIP 11262) protein is Aspartate 1-decarboxylase.